Here is a 253-residue protein sequence, read N- to C-terminus: Proteasome subunit alpha type-7 (253 aa).

The protein belongs to the peptidase T1A family. In terms of assembly, the 26S proteasome consists of a 20S proteasome core and two 19S regulatory subunits. The 20S proteasome core is composed of 28 subunits that are arranged in four stacked rings, resulting in a barrel-shaped structure. The two end rings are each formed by seven alpha subunits, and the two central rings are each formed by seven beta subunits. The catalytic chamber with the active sites is on the inside of the barrel.

The protein resides in the cytoplasm. Its subcellular location is the nucleus. Functionally, the proteasome is a multicatalytic proteinase complex which is characterized by its ability to cleave peptides with Arg, Phe, Tyr, Leu, and Glu adjacent to the leaving group at neutral or slightly basic pH. The proteasome has an ATP-dependent proteolytic activity. The polypeptide is Proteasome subunit alpha type-7 (pas-4) (Caenorhabditis elegans).